Consider the following 376-residue polypeptide: Glutamate 5-kinase (376 aa).

Lysine 15 serves as a coordination point for ATP. Substrate-binding residues include serine 55, aspartate 142, and asparagine 154. Residues 174–175 (TD) and 216–222 (TGGMATK) each bind ATP. The PUA domain maps to 281–359 (AGKVLVDAGA…AEIEQLLGYR (79 aa)).

The protein belongs to the glutamate 5-kinase family.

It localises to the cytoplasm. The enzyme catalyses L-glutamate + ATP = L-glutamyl 5-phosphate + ADP. It participates in amino-acid biosynthesis; L-proline biosynthesis; L-glutamate 5-semialdehyde from L-glutamate: step 1/2. Its function is as follows. Catalyzes the transfer of a phosphate group to glutamate to form L-glutamate 5-phosphate. In Trichlorobacter lovleyi (strain ATCC BAA-1151 / DSM 17278 / SZ) (Geobacter lovleyi), this protein is Glutamate 5-kinase.